A 225-amino-acid polypeptide reads, in one-letter code: MHIHDWPTHERPREKLLARGATALSDAELLAILVGSGLRGQDAVQTARDLLHRHGPLRLLLDRPAKALTRLPGLGPASACKFAAAMELAQRHLMSALERGEALSDPPSVGRYFSQRLRARAYEVFAVLFLDNRHRAIAFEELFTGTIDGADIHPREVVRRALLHNAAAVIVGHNHPSGNPEPSEADRAVTKRLLDSLELVDIRLLDHFVIGDGRPVSFAERGWLE.

In terms of domain architecture, MPN spans 102–224 (ALSDPPSVGR…PVSFAERGWL (123 aa)). The Zn(2+) site is built by histidine 173, histidine 175, and aspartate 186. The JAMM motif signature appears at 173 to 186 (HNHPSGNPEPSEAD).

Belongs to the UPF0758 family.

The protein is UPF0758 protein XAC3915 of Xanthomonas axonopodis pv. citri (strain 306).